We begin with the raw amino-acid sequence, 694 residues long: Polyphosphate kinase (694 aa).

N45 is an ATP binding site. Residues R367 and R397 each coordinate Mg(2+). Residue H427 is the Phosphohistidine intermediate of the active site. Residues Y460, R553, and H580 each coordinate ATP.

This sequence belongs to the polyphosphate kinase 1 (PPK1) family. Mg(2+) is required as a cofactor. Post-translationally, an intermediate of this reaction is the autophosphorylated ppk in which a phosphate is covalently linked to a histidine residue through a N-P bond.

The catalysed reaction is [phosphate](n) + ATP = [phosphate](n+1) + ADP. In terms of biological role, catalyzes the reversible transfer of the terminal phosphate of ATP to form a long-chain polyphosphate (polyP). In Campylobacter jejuni (strain RM1221), this protein is Polyphosphate kinase.